A 549-amino-acid polypeptide reads, in one-letter code: CTP synthase (549 aa).

The segment at 1–267 (MTKFVFVTGG…AAQVLSLLNL (267 aa)) is amidoligase domain. S13 serves as a coordination point for CTP. Residue S13 coordinates UTP. ATP is bound by residues 14–19 (SIGKGI) and D71. Positions 71 and 141 each coordinate Mg(2+). CTP-binding positions include 148-150 (DIE), 188-193 (KTKPTQ), and K224. UTP-binding positions include 188-193 (KTKPTQ) and K224. Residues 292 to 534 (EIAIVGKYVR…VQAARTHSSD (243 aa)) enclose the Glutamine amidotransferase type-1 domain. Position 354 (G354) interacts with L-glutamine. C381 serves as the catalytic Nucleophile; for glutamine hydrolysis. L-glutamine-binding positions include 382-385 (LGMQ), E405, and R462. Residues H507 and E509 contribute to the active site.

This sequence belongs to the CTP synthase family. Homotetramer.

The enzyme catalyses UTP + L-glutamine + ATP + H2O = CTP + L-glutamate + ADP + phosphate + 2 H(+). It carries out the reaction L-glutamine + H2O = L-glutamate + NH4(+). The catalysed reaction is UTP + NH4(+) + ATP = CTP + ADP + phosphate + 2 H(+). It functions in the pathway pyrimidine metabolism; CTP biosynthesis via de novo pathway; CTP from UDP: step 2/2. With respect to regulation, allosterically activated by GTP, when glutamine is the substrate; GTP has no effect on the reaction when ammonia is the substrate. The allosteric effector GTP functions by stabilizing the protein conformation that binds the tetrahedral intermediate(s) formed during glutamine hydrolysis. Inhibited by the product CTP, via allosteric rather than competitive inhibition. Catalyzes the ATP-dependent amination of UTP to CTP with either L-glutamine or ammonia as the source of nitrogen. Regulates intracellular CTP levels through interactions with the four ribonucleotide triphosphates. This Cyanothece sp. (strain PCC 7425 / ATCC 29141) protein is CTP synthase.